Consider the following 344-residue polypeptide: MAAASGVRRIKLGSQGLEVSAQGLGCMGLSIFDGTTKVETDLIALIHHAINSGITLLDTSDIYGPETNELLLGQALKDGMREKVELATKFGLLLKDQKLGYRGDPAYVRAACEASLRRLGVSCIDLYYQHRIDTTVPIEVTIGELKKLVEEGKIKYIGLSEACASTIRRAHAVHPLTAVQLEWSLWSRDVEEDIIPTCRELGIGIVAYSPLGLGFFAAGPKFIESMDNGDYRKGLPRFQQENLDHNKILYEKVNAMAEKKSCTPAQLALAWVHHQGNDVCPIPGTSKIKNLNQNIGALSVKLSIEEMAELDAMGHPDSVKGERSATYIVTYKNSETPPLSSWTS.

Y63 (proton donor) is an active-site residue. A substrate-binding site is contributed by H130. Residue S209–G219 participates in NADP(+) binding.

This sequence belongs to the aldo/keto reductase family.

The protein is Probable aldo-keto reductase 1 of Arabidopsis thaliana (Mouse-ear cress).